Consider the following 214-residue polypeptide: Mediator of RNA polymerase II transcription subunit 29 (214 aa).

The interval 1-78 is disordered; it reads MMNQMGMHMQ…QQQSQQTEKV (78 aa). Over residues 15 to 34 the composition is skewed to gly residues; it reads VPGGPGGPVGMAGGPVGGVG. The segment covering 44–74 has biased composition (low complexity); the sequence is QMQQQQQVAAQQQQQQQQQQQAQAHQQQSQQ.

Belongs to the Mediator complex subunit 29 family. In terms of assembly, component of the Mediator complex.

The protein localises to the nucleus. Its function is as follows. Component of the Mediator complex, a coactivator involved in the regulated transcription of nearly all RNA polymerase II-dependent genes. Mediator functions as a bridge to convey information from gene-specific regulatory proteins to the basal RNA polymerase II transcription machinery. Mediator is recruited to promoters by direct interactions with regulatory proteins and serves as a scaffold for the assembly of a functional preinitiation complex with RNA polymerase II and the general transcription factors. This is Mediator of RNA polymerase II transcription subunit 29 (ix) from Aedes aegypti (Yellowfever mosquito).